Consider the following 418-residue polypeptide: Protein YdhQ (418 aa).

The protein is Protein YdhQ (ydhQ) of Escherichia coli (strain K12).